Reading from the N-terminus, the 1043-residue chain is Desmoglein-1 (1043 aa).

Positions 1–23 (MNWPFFRAAVVLFIFLVVLEVNS) are cleaved as a signal peptide. The propeptide occupies 24-49 (DFRIQVRDYNTKNGTIKWHSLRRQKR). 4 consecutive Cadherin domains span residues 50 to 158 (EWIK…PVFS), 159 to 270 (MSTF…PYME), 271 to 385 (LPTQ…GSVF), and 386 to 498 (RPGS…VNGS). At 50 to 551 (EWIKFAAACR…PLRDNVHFGP (502 aa)) the chain is on the extracellular side. 2 N-linked (GlcNAc...) asparagine glycosylation sites follow: Asn-110 and Asn-180. N-linked (GlcNAc...) asparagine glycosylation is present at Asn-496. The chain crosses the membrane as a helical span at residues 552 to 572 (AGIGLLIMGFLVLGLVPFLLM). Topologically, residues 573 to 1043 (CCDCGGAPGG…TKYSTVQYTK (471 aa)) are cytoplasmic. Residues 770–807 (DVEPFPDSDPSWPPKSTEPVCPPQGTEPTGGGHPPISP) are disordered. Desmoglein repeat repeat units lie at residues 819-845 (TYPSGPGVQHPTPIPDPLGYGNVTVTE), 846-875 (SYTSSGTLKPSVHIHDNRHASNVVVTERVV), 876-905 (GPISGADLQGMLEMPDLRDGSNVIVTERVI), 906-933 (APSSSLPTTLTIPDPRQSSNVVVTERVI), and 934-962 (QPTSGIVGNLSMHPELSNTHNVIVTERVV).

In terms of assembly, binds to JUP/plakoglobin. Interacts with PKP2. Interacts with DSC3; there is evidence to suggest that the interaction promotes cell-cell adhesion of keratinocytes. As to expression, expressed in the epidermis. Expressed in the muzzle epithelium.

It is found in the cell membrane. The protein resides in the cell junction. The protein localises to the desmosome. It localises to the cytoplasm. Its subcellular location is the nucleus. Functionally, component of intercellular desmosome junctions. Involved in the interaction of plaque proteins and intermediate filaments mediating cell-cell adhesion. This Bos taurus (Bovine) protein is Desmoglein-1 (DSG1).